The following is a 283-amino-acid chain: MKSELNLPAGFRFHPTDEELVKFYLCRKCASEQISAPVIAEIDLYKFNPWELPEMSLYGEKEWYFFSPRDRKYPNGSRPNRAAGTGYWKATGADKPIGKPKTLGIKKALVFYAGKAPKGIKTNWIMHEYRLANVDRSASVNKKNNLRLDDWVLCRIYNKKGTMEKYFPADEKPRTTTMAEQSSSPFDTSDSTYPTLQEDDSSSSGGHGHVVSPDVLEVQSEPKWGELEDALEAFDTSMFGSSMELLQPDAFVPQFLYQSDYFTSFQDPPEQKPFLNWSFAPQG.

In terms of domain architecture, NAC spans 7-159 (LPAGFRFHPT…DWVLCRIYNK (153 aa)). The DNA-binding element occupies 103–165 (LGIKKALVFY…IYNKKGTMEK (63 aa)). Residues 171 to 211 (EKPRTTTMAEQSSSPFDTSDSTYPTLQEDDSSSSGGHGHVV) form a disordered region. The span at 175 to 195 (TTTMAEQSSSPFDTSDSTYPT) shows a compositional bias: polar residues.

Homodimer. Interacts with AHK2. Interacts with AHL12 and AHL27. Interacts with the helicase domain of the tobamovirus (TMV) replicase. As to expression, expressed in roots, cotyledons, rosette leaves, cauline leaves and mature flowers. Expressed at low levels in stems and flower buds.

The protein localises to the nucleus. In terms of biological role, involved in disease resistance response. May function as repressor of pathogenesis-related proteins. May function in the regulation of host basal defense responses against viral infection. Transcriptional activator involved in responses to wounding and infection with tobamovirus (TMV). Binds to the DNA sequences 5'-AAAATATCT-3' and 5'AGATTTTT-3' of CYP734A1/BAS1 and CYP72C1/SOB7 promoters, respectively. Acts as a suppressor of the brassinosteroid (BR)-inactivating enzymes CYP734A1/BAS1 and CYP72C1/SOB7, and prevents their expression in almost all tissues. Plays a central role in integrating BR homeostasis and seedling development. Regulates the spatial regulation of BR homeostasis and participates in the regulation of hypocotyl elongation and root growth by suppressing BR catabolism. Mediates connection between BR catabolism and photomorphogenesis. Binds to, and transactivates the promoter of the auxin biosynthetic gene NIT2. Stress-responsive NAC transcription factor involved in ABA-inducible leaf senescence signaling. Required for normal seed development and morphology. This is Protein ATAF2 (NAC081) from Arabidopsis thaliana (Mouse-ear cress).